We begin with the raw amino-acid sequence, 211 residues long: Pyridoxine/pyridoxamine 5'-phosphate oxidase (211 aa).

Substrate-binding positions include 8 to 11 and K66; that span reads RNEY. Residues 61 to 66, 76 to 77, K83, and Q105 each bind FMN; these read RVVLLK and FT. The substrate site is built by Y123, R127, and S131. FMN contacts are provided by residues 140 to 141 and W184; that span reads QS. Residue 190-192 participates in substrate binding; it reads RLH. An FMN-binding site is contributed by R194.

Belongs to the pyridoxamine 5'-phosphate oxidase family. Homodimer. Requires FMN as cofactor.

The enzyme catalyses pyridoxamine 5'-phosphate + O2 + H2O = pyridoxal 5'-phosphate + H2O2 + NH4(+). It catalyses the reaction pyridoxine 5'-phosphate + O2 = pyridoxal 5'-phosphate + H2O2. It functions in the pathway cofactor metabolism; pyridoxal 5'-phosphate salvage; pyridoxal 5'-phosphate from pyridoxamine 5'-phosphate: step 1/1. The protein operates within cofactor metabolism; pyridoxal 5'-phosphate salvage; pyridoxal 5'-phosphate from pyridoxine 5'-phosphate: step 1/1. Its function is as follows. Catalyzes the oxidation of either pyridoxine 5'-phosphate (PNP) or pyridoxamine 5'-phosphate (PMP) into pyridoxal 5'-phosphate (PLP). In Mannheimia succiniciproducens (strain KCTC 0769BP / MBEL55E), this protein is Pyridoxine/pyridoxamine 5'-phosphate oxidase.